Consider the following 130-residue polypeptide: Protein YoeA (130 aa).

The signal sequence occupies residues 1-28 (MLYNIPCRIYILSTLSLCISGIVSTATA). Residues 51–130 (NLWESPATIQ…RCRRYSRGER (80 aa)) form the TBDR plug domain.

This sequence belongs to the TonB-dependent receptor family.

This chain is Protein YoeA (yoeA), found in Escherichia coli (strain K12).